The sequence spans 281 residues: Bifunctional protein FolD (281 aa).

NADP(+) is bound by residues 165 to 167, Thr192, and Val233; that span reads GRG.

The protein belongs to the tetrahydrofolate dehydrogenase/cyclohydrolase family. Homodimer.

The catalysed reaction is (6R)-5,10-methylene-5,6,7,8-tetrahydrofolate + NADP(+) = (6R)-5,10-methenyltetrahydrofolate + NADPH. It carries out the reaction (6R)-5,10-methenyltetrahydrofolate + H2O = (6R)-10-formyltetrahydrofolate + H(+). The protein operates within one-carbon metabolism; tetrahydrofolate interconversion. Catalyzes the oxidation of 5,10-methylenetetrahydrofolate to 5,10-methenyltetrahydrofolate and then the hydrolysis of 5,10-methenyltetrahydrofolate to 10-formyltetrahydrofolate. This chain is Bifunctional protein FolD, found in Mycobacteroides abscessus (strain ATCC 19977 / DSM 44196 / CCUG 20993 / CIP 104536 / JCM 13569 / NCTC 13031 / TMC 1543 / L948) (Mycobacterium abscessus).